Reading from the N-terminus, the 260-residue chain is Ribosomal RNA small subunit methyltransferase A (260 aa).

6 residues coordinate S-adenosyl-L-methionine: Asn16, Leu18, Gly43, Glu64, Asp86, and Asn108.

This sequence belongs to the class I-like SAM-binding methyltransferase superfamily. rRNA adenine N(6)-methyltransferase family. RsmA subfamily.

It is found in the cytoplasm. It carries out the reaction adenosine(1518)/adenosine(1519) in 16S rRNA + 4 S-adenosyl-L-methionine = N(6)-dimethyladenosine(1518)/N(6)-dimethyladenosine(1519) in 16S rRNA + 4 S-adenosyl-L-homocysteine + 4 H(+). Specifically dimethylates two adjacent adenosines (A1518 and A1519) in the loop of a conserved hairpin near the 3'-end of 16S rRNA in the 30S particle. May play a critical role in biogenesis of 30S subunits. This is Ribosomal RNA small subunit methyltransferase A from Buchnera aphidicola subsp. Baizongia pistaciae (strain Bp).